A 214-amino-acid polypeptide reads, in one-letter code: CASP-like protein 3A1 (214 aa).

The Cytoplasmic portion of the chain corresponds to Met-1–His-49. The helical transmembrane segment at Val-50–Ala-70 threads the bilayer. Residues His-71–Glu-96 lie on the Extracellular side of the membrane. Residues Tyr-97–Met-117 traverse the membrane as a helical segment. The Cytoplasmic segment spans residues Ser-118–His-132. A helical membrane pass occupies residues Ala-133–Ala-153. Over Ala-154 to Asn-182 the chain is Extracellular. Asn-161 carries an N-linked (GlcNAc...) asparagine glycan. Residues His-183–Val-203 form a helical membrane-spanning segment. Topologically, residues Gln-204–Tyr-214 are cytoplasmic.

Belongs to the Casparian strip membrane proteins (CASP) family. Homodimer and heterodimers.

The protein resides in the cell membrane. This is CASP-like protein 3A1 from Ricinus communis (Castor bean).